We begin with the raw amino-acid sequence, 444 residues long: Biotin carboxylase 2 (444 aa).

The 444-residue stretch at 1–444 (MFTKVLIANR…VTTDFLKQHL (444 aa)) folds into the Biotin carboxylation domain. Residues Lys116, Lys158, 164-165 (GG), 200-203 (EKVI), His208, and His235 each bind ATP. The ATP-grasp domain maps to 120–317 (RKAMEAAGVP…LVEQQLRIAA (198 aa)). A hydrogencarbonate-binding site is contributed by Lys237. ATP contacts are provided by Glu275 and Glu288. Mg(2+) contacts are provided by Glu275, Glu288, and Asn290. Residues Glu275, Glu288, and Asn290 each contribute to the Mn(2+) site. Positions 292, 295, and 338 each coordinate hydrogencarbonate. Arg292 is a catalytic residue. A biotin-binding site is contributed by Arg338.

As to quaternary structure, acetyl-CoA carboxylase is a heterohexamer of biotin carboxyl carrier protein, biotin carboxylase and the two subunits of carboxyl transferase in a 2:2 complex. The cofactor is Mg(2+). Requires Mn(2+) as cofactor.

The catalysed reaction is N(6)-biotinyl-L-lysyl-[protein] + hydrogencarbonate + ATP = N(6)-carboxybiotinyl-L-lysyl-[protein] + ADP + phosphate + H(+). It participates in lipid metabolism; malonyl-CoA biosynthesis; malonyl-CoA from acetyl-CoA: step 1/1. Its function is as follows. This protein is a component of the acetyl coenzyme A carboxylase complex; first, biotin carboxylase catalyzes the carboxylation of the carrier protein and then the transcarboxylase transfers the carboxyl group to form malonyl-CoA. The polypeptide is Biotin carboxylase 2 (accC2) (Bacillus subtilis (strain 168)).